Consider the following 565-residue polypeptide: NAD-dependent malic enzyme (565 aa).

Tyr-104 functions as the Proton donor in the catalytic mechanism. Arg-157 lines the NAD(+) pocket. The Proton acceptor role is filled by Lys-175. A divalent metal cation-binding residues include Glu-246, Asp-247, and Asp-270. NAD(+) is bound by residues Asp-270 and Asn-418.

This sequence belongs to the malic enzymes family. Homotetramer. Requires Mg(2+) as cofactor. The cofactor is Mn(2+).

The catalysed reaction is (S)-malate + NAD(+) = pyruvate + CO2 + NADH. It carries out the reaction oxaloacetate + H(+) = pyruvate + CO2. This is NAD-dependent malic enzyme from Sodalis glossinidius (strain morsitans).